We begin with the raw amino-acid sequence, 431 residues long: Phosphoribosylamine--glycine ligase (431 aa).

Residues 107–315 enclose the ATP-grasp domain; sequence RWLMEEYKIP…LVEIGEEIVD (209 aa). 134–193 contacts ATP; sequence IDDFGRPVVVKPLGLTGGKGVKVVGYQLKDNEEAKAYAEELIKRDGKVLIEERTDGVEFT. Positions 273, 285, and 287 each coordinate Mg(2+). Residues Gln273, Glu285, and Asn287 each coordinate Mn(2+).

Belongs to the GARS family. It depends on Mg(2+) as a cofactor. Requires Mn(2+) as cofactor.

The enzyme catalyses 5-phospho-beta-D-ribosylamine + glycine + ATP = N(1)-(5-phospho-beta-D-ribosyl)glycinamide + ADP + phosphate + H(+). Its pathway is purine metabolism; IMP biosynthesis via de novo pathway; N(1)-(5-phospho-D-ribosyl)glycinamide from 5-phospho-alpha-D-ribose 1-diphosphate: step 2/2. The polypeptide is Phosphoribosylamine--glycine ligase (Thermococcus kodakarensis (strain ATCC BAA-918 / JCM 12380 / KOD1) (Pyrococcus kodakaraensis (strain KOD1))).